The following is a 97-amino-acid chain: Protein CYSTEINE-RICH TRANSMEMBRANE MODULE 7 (97 aa).

Positions 1–27 are disordered; that stretch reads MASYHVSHDSYQSPGPSPLYQPIIEAP. Positions 15 to 27 are enriched in pro residues; the sequence is GPSPLYQPIIEAP. The chain crosses the membrane as a helical span at residues 68–88; the sequence is YVGCFPFLRSCLTTLCCCWFV.

Belongs to the CYSTM1 family. In terms of assembly, homodimer and heterodimers. Interacts with CYSTM3, CYSTM4, CYSTM5, CYSTM6, CYSTM10, WIH1/CYSTM13 and CYSTM11. Binds weakly to CYSTM1, CYSTM2 and CYSTM12. In terms of tissue distribution, mostly expressed in siliques and, to a lower extent, in stems, roots, leaves and flowers.

It localises to the cell membrane. Involved in resistance to abiotic stress. This chain is Protein CYSTEINE-RICH TRANSMEMBRANE MODULE 7, found in Arabidopsis thaliana (Mouse-ear cress).